A 300-amino-acid polypeptide reads, in one-letter code: N-acetylmuramic acid 6-phosphate etherase (300 aa).

An SIS domain is found at 57 to 220 (ITHAFAHGGR…TSGAMIRSGK (164 aa)). Glu-85 functions as the Proton donor in the catalytic mechanism. Glu-116 is an active-site residue.

The protein belongs to the GCKR-like family. MurNAc-6-P etherase subfamily. Homodimer.

The catalysed reaction is N-acetyl-D-muramate 6-phosphate + H2O = N-acetyl-D-glucosamine 6-phosphate + (R)-lactate. It functions in the pathway amino-sugar metabolism; 1,6-anhydro-N-acetylmuramate degradation. It participates in amino-sugar metabolism; N-acetylmuramate degradation. Its pathway is cell wall biogenesis; peptidoglycan recycling. Functionally, specifically catalyzes the cleavage of the D-lactyl ether substituent of MurNAc 6-phosphate, producing GlcNAc 6-phosphate and D-lactate. Together with AnmK, is also required for the utilization of anhydro-N-acetylmuramic acid (anhMurNAc) either imported from the medium or derived from its own cell wall murein, and thus plays a role in cell wall recycling. The protein is N-acetylmuramic acid 6-phosphate etherase of Vibrio vulnificus (strain CMCP6).